A 313-amino-acid polypeptide reads, in one-letter code: Formimidoylglutamase (313 aa).

Residues H130, D155, H157, D159, D241, and D243 each contribute to the Mn(2+) site.

This sequence belongs to the arginase family. Mn(2+) serves as cofactor.

It carries out the reaction N-formimidoyl-L-glutamate + H2O = formamide + L-glutamate. It participates in amino-acid degradation; L-histidine degradation into L-glutamate; L-glutamate from N-formimidoyl-L-glutamate (hydrolase route): step 1/1. Its function is as follows. Catalyzes the conversion of N-formimidoyl-L-glutamate to L-glutamate and formamide. The protein is Formimidoylglutamase of Salmonella choleraesuis (strain SC-B67).